The sequence spans 92 residues: Ig kappa chain V region 3381 (92 aa).

Residues 1–23 form a framework-1 region; that stretch reads AFELTQTPASVEAAVGGTVTINC. The tract at residues 24 to 34 is complementarity-determining-1; the sequence is QASESISNWLA. The tract at residues 35-49 is framework-2; sequence WYQQKPGQPXKLLIY. The complementarity-determining-2 stretch occupies residues 50–56; it reads KASTLAS. Residues 57-88 are framework-3; it reads GVSSRFKGSGSGTQFTLTISDLECADAATYYC. Residues 89–92 form a complementarity-determining-3 region; it reads QSTD.

This chain is Ig kappa chain V region 3381, found in Oryctolagus cuniculus (Rabbit).